The sequence spans 552 residues: Outer dynein arm protein 1 (552 aa).

Residues 1-27 form a disordered region; it reads MPSADATRGGGSAGSMGKGTLGAGDTL. Residues 8–22 show a composition bias toward gly residues; sequence RGGGSAGSMGKGTLG. 3 coiled-coil regions span residues 28-59, 120-260, and 331-395; these read GHKSVLDKQRAAIEKLRAQNEQLKTELLLENK, SAKE…QELL, and TLFN…YEKR. Disordered regions lie at residues 482–515 and 528–552; these read NRIIIEPPSTTQEEEVEGLEPEPVEEDRPLTREH and LETAIKVRPAGADATGGKRGSPTRR. Acidic residues predominate over residues 493-506; the sequence is QEEEVEGLEPEPVE.

It belongs to the ODA1/DCC2 family. As to quaternary structure, component of the outer dynein arm complex.

It localises to the cytoplasm. It is found in the cytoskeleton. The protein localises to the cilium axoneme. Its function is as follows. Component of the outer dynein arm complex required for assembly of the outer dynein arm-docking complex (ODA-DC) and the outer dynein arm onto the doublet microtubule. The chain is Outer dynein arm protein 1 (ODA1) from Chlamydomonas reinhardtii (Chlamydomonas smithii).